Consider the following 968-residue polypeptide: RNA polymerase-associated protein RapA (968 aa).

Positions 164–334 (DVGRRHAPRV…FARLRLLDPN (171 aa)) constitute a Helicase ATP-binding domain. An ATP-binding site is contributed by 177–184 (DEVGLGKT). A DEAH box motif is present at residues 280-283 (DEAH). The Helicase C-terminal domain occupies 490–662 (RVEWLMGYLT…YLASPDETEG (173 aa)).

The protein belongs to the SNF2/RAD54 helicase family. RapA subfamily. In terms of assembly, interacts with the RNAP. Has a higher affinity for the core RNAP than for the holoenzyme. Its ATPase activity is stimulated by binding to RNAP.

Transcription regulator that activates transcription by stimulating RNA polymerase (RNAP) recycling in case of stress conditions such as supercoiled DNA or high salt concentrations. Probably acts by releasing the RNAP, when it is trapped or immobilized on tightly supercoiled DNA. Does not activate transcription on linear DNA. Probably not involved in DNA repair. This is RNA polymerase-associated protein RapA from Escherichia coli O127:H6 (strain E2348/69 / EPEC).